The chain runs to 233 residues: MTTTERPPPPPLSMSKKETPTLLDSISKKISTTETLQRLRNKNLTTLNKIKYDSELLLHYLYDDHHNKNSDYANNNINVIKISKVKVKKTGASILAHYFAQIHVSTGYSFEFHPGSQPRTFQTIHTDGLIIKVLILCDECCKKELRDYIKGENSFNVAFRNCESILCRRVSFQTVLLTCAILLLLFNVEKFSMINLLIILLILLSLFCHNNYIISNPYIEFCNHKSTNKKYDR.

2 helical membrane passes run 171–191 (SFQT…VEKF) and 194–214 (INLL…NYII).

Its subcellular location is the host nucleus. It localises to the host membrane. The protein localises to the virion. Plays an essential role in the assembly of nucleocapsids with envelopes. In Autographa californica nuclear polyhedrosis virus (AcMNPV), this protein is Protein AC81 (AC81).